The sequence spans 55 residues: Large ribosomal subunit protein bL33 (55 aa).

It belongs to the bacterial ribosomal protein bL33 family.

The polypeptide is Large ribosomal subunit protein bL33 (Mesorhizobium japonicum (strain LMG 29417 / CECT 9101 / MAFF 303099) (Mesorhizobium loti (strain MAFF 303099))).